A 1196-amino-acid chain; its full sequence is Major DNA-binding protein (1196 aa).

A zinc finger spans residues Cys-499 to His-512. 2 short sequence motifs (required for filament formation) span residues Phe-843 to Trp-844 and Phe-1142 to Phe-1144. Residues Gly-1158–Leu-1196 are disordered. The tract at residues Arg-1170–Leu-1196 is required for nuclear localization. Residues Phe-1174–Leu-1196 show a composition bias toward basic and acidic residues.

It belongs to the herpesviridae major DNA-binding protein family. Homooligomers. Forms double-helical filaments necessary for the formation of replication compartments within the host nucleus. Interacts with the origin-binding protein. Interacts with the helicase primase complex; this interaction stimulates primer synthesis activity of the helicase-primase complex. Interacts with the DNA polymerase. Interacts with the alkaline exonuclease; this interaction increases its nuclease processivity. Interacts with ICP27; this interaction plays a role in the stimulation of late gene transcription.

Its subcellular location is the host nucleus. Functionally, plays several crucial roles in viral infection. Participates in the opening of the viral DNA origin to initiate replication by interacting with the origin-binding protein. May disrupt loops, hairpins and other secondary structures present on ssDNA to reduce and eliminate pausing of viral DNA polymerase at specific sites during elongation. Promotes viral DNA recombination by performing strand-transfer, characterized by the ability to transfer a DNA strand from a linear duplex to a complementary single-stranded DNA circle. Can also catalyze the renaturation of complementary single strands. Additionally, reorganizes the host cell nucleus, leading to the formation of prereplicative sites and replication compartments. This process is driven by the protein which can form double-helical filaments in the absence of DNA. In Homo sapiens (Human), this protein is Major DNA-binding protein.